A 118-amino-acid chain; its full sequence is Small ribosomal subunit protein uS13 (118 aa).

The tract at residues 93–118 is disordered; the sequence is KGLPVRGQRTKTNARTRKGPRKPIRK.

The protein belongs to the universal ribosomal protein uS13 family. In terms of assembly, part of the 30S ribosomal subunit. Forms a loose heterodimer with protein S19. Forms two bridges to the 50S subunit in the 70S ribosome.

Its function is as follows. Located at the top of the head of the 30S subunit, it contacts several helices of the 16S rRNA. In the 70S ribosome it contacts the 23S rRNA (bridge B1a) and protein L5 of the 50S subunit (bridge B1b), connecting the 2 subunits; these bridges are implicated in subunit movement. Contacts the tRNAs in the A and P-sites. This is Small ribosomal subunit protein uS13 from Ectopseudomonas mendocina (strain ymp) (Pseudomonas mendocina).